We begin with the raw amino-acid sequence, 219 residues long: Leukocyte surface antigen CD53 (219 aa).

Residues 1-11 (MGMSSLKLLKY) are Cytoplasmic-facing. The helical transmembrane segment at 12 to 32 (VLFIFNLLFWVCGCCILGFGI) threads the bilayer. At 33–54 (YFLVQNTYGVLFRNLPFLTLGN) the chain is on the extracellular side. The helical transmembrane segment at 55 to 69 (ILVIVGSIIMVVAFL) threads the bilayer. Residues 70–80 (GCMGSIKENKC) are Cytoplasmic-facing. Residues 81–106 (LLMSFFVLLLIILLAEVTIAILLFVY) traverse the membrane as a helical segment. Topologically, residues 107–181 (EQKLNTLVAE…NKAKSWFHSN (75 aa)) are extracellular. N-linked (GlcNAc...) asparagine glycans are attached at residues asparagine 119, asparagine 129, and asparagine 148. A helical membrane pass occupies residues 182–206 (FLYIGIITICVCVIQVLGMSFALTL). Residues 207-219 (NCQIDKTSQALGL) are Cytoplasmic-facing.

The protein belongs to the tetraspanin (TM4SF) family. In terms of assembly, interacts with SCIMP. Interacts with CD45/PTPRC. Interacts with IL7R. Interacts with RBL2 and PPP2CA.

It is found in the cell membrane. It localises to the cell junction. The protein resides in the membrane. Its function is as follows. Structural component of specialized membrane microdomains known as tetraspanin-enriched microdomains (TERMs), which act as platforms for receptor clustering and signaling. Participates thereby in diverse biological functions such as cell signal transduction, adhesion, migration and protein trafficking. Plays a role in the activation of monocytes and B-cells. Acts as an essential regulator of B-cell development by promoting interleukin-7 receptor/IL7R signaling. Also promotes, in B-cells, the BCR signaling by recruiting PKC to the plasma membrane in order to phosphorylate its substrates. Plays an essential role in lymphocyte homing to lymph nodes by stabilizing L-selectin/SELL cell surface expression. Also mediates metabolic and inflammatory functions in hepatocytes and adipose tissue by promoting TNF-alpha and LPS signaling independent of the immune compartment. Protects hematopoietic stem cell function in response to stress by facilitating DREAM complex activity through association with p130/RBL2 and its phosphatase PP2A. The protein is Leukocyte surface antigen CD53 (Cd53) of Mus musculus (Mouse).